Here is a 253-residue protein sequence, read N- to C-terminus: Sulfate transporter CysZ (253 aa).

Transmembrane regions (helical) follow at residues 31–51 (FVIL…WWLF), 75–95 (LLWP…FSTI), 151–171 (IVLL…PVLW), and 222–242 (IPVL…AMWV).

This sequence belongs to the CysZ family.

The protein localises to the cell inner membrane. Its function is as follows. High affinity, high specificity proton-dependent sulfate transporter, which mediates sulfate uptake. Provides the sulfur source for the cysteine synthesis pathway. The polypeptide is Sulfate transporter CysZ (Citrobacter koseri (strain ATCC BAA-895 / CDC 4225-83 / SGSC4696)).